A 148-amino-acid polypeptide reads, in one-letter code: MIIETIIGNIQTLPSLPPHIERVYMASDDLVKRIQRVVTDHGRELGIRLKEAKELADGDVLWMDDHNAIVVSVLPEDLLVIKPVSLKQMGEIAHQIGNRHLPAQFEEGEMLVQYDYLVEELLQQLAIPYKREKRKVKQAFRHIGHRHD.

Belongs to the UreE family.

The protein localises to the cytoplasm. Its function is as follows. Involved in urease metallocenter assembly. Binds nickel. Probably functions as a nickel donor during metallocenter assembly. This Geobacillus kaustophilus (strain HTA426) protein is Urease accessory protein UreE.